Here is a 347-residue protein sequence, read N- to C-terminus: Haptoglobin (347 aa).

The first 18 residues, 1–18, serve as a signal peptide directing secretion; that stretch reads MSALGAVIALLLWGQLFA. Residues 31–88 form the Sushi domain; the sequence is DGCPKPPQIAHGYVEHSVRYQCKNYYRLRTEGDGVYTLNSEKQWINKAVGDKLPECEA. Intrachain disulfides connect cysteine 52-cysteine 86, cysteine 90-cysteine 207, cysteine 250-cysteine 281, and cysteine 292-cysteine 322. In terms of domain architecture, Peptidase S1 spans 103 to 347; the sequence is ILGGHLDAKG…DWVQKTIAKN (245 aa). N-linked (GlcNAc...) asparagine glycans are attached at residues asparagine 125, asparagine 148, asparagine 152, and asparagine 182. The interval 259–264 is interaction with CD163; the sequence is VPEKKT.

The protein belongs to the peptidase S1 family. Tetramer of two alpha and two beta chains; disulfide-linked. The hemoglobin/haptoglobin complex is composed of a haptoglobin dimer bound to two hemoglobin alpha-beta dimers. Interacts with CD163. Interacts with ERGIC3.

Its subcellular location is the secreted. As a result of hemolysis, hemoglobin is found to accumulate in the kidney and is secreted in the urine. Haptoglobin captures, and combines with free plasma hemoglobin to allow hepatic recycling of heme iron and to prevent kidney damage. Haptoglobin also acts as an antioxidant, has antibacterial activity and plays a role in modulating many aspects of the acute phase response. Hemoglobin/haptoglobin complexes are rapidly cleared by the macrophage CD163 scavenger receptor expressed on the surface of liver Kupfer cells through an endocytic lysosomal degradation pathway. This is Haptoglobin (HP) from Pongo abelii (Sumatran orangutan).